A 205-amino-acid polypeptide reads, in one-letter code: Ribonuclease HII (205 aa).

In terms of domain architecture, RNase H type-2 spans 14–201 (EIIAGVDEAG…KGNINHSAIL (188 aa)). Aspartate 20, glutamate 21, and aspartate 111 together coordinate a divalent metal cation.

Belongs to the RNase HII family. Requires Mn(2+) as cofactor. Mg(2+) is required as a cofactor.

It localises to the cytoplasm. It catalyses the reaction Endonucleolytic cleavage to 5'-phosphomonoester.. Its function is as follows. Endonuclease that specifically degrades the RNA of RNA-DNA hybrids. The chain is Ribonuclease HII from Orientia tsutsugamushi (strain Ikeda) (Rickettsia tsutsugamushi).